We begin with the raw amino-acid sequence, 65 residues long: Small ribosomal subunit protein bS21 (65 aa).

The segment at 45–65 (GRLKRSRSRRRAQRANEERNS) is disordered. Positions 48–57 (KRSRSRRRAQ) are enriched in basic residues.

This sequence belongs to the bacterial ribosomal protein bS21 family.

This Chlorobium phaeobacteroides (strain DSM 266 / SMG 266 / 2430) protein is Small ribosomal subunit protein bS21.